The chain runs to 160 residues: Phosphopantetheine adenylyltransferase (160 aa).

Thr9 contributes to the substrate binding site. Residues 9–10 and His17 contribute to the ATP site; that span reads TF. Positions 41, 73, and 87 each coordinate substrate. ATP is bound by residues 88 to 90, Glu98, and 123 to 129; these read GLR and YSFLSSS.

This sequence belongs to the bacterial CoaD family. In terms of assembly, homohexamer. Mg(2+) serves as cofactor.

It is found in the cytoplasm. The catalysed reaction is (R)-4'-phosphopantetheine + ATP + H(+) = 3'-dephospho-CoA + diphosphate. The protein operates within cofactor biosynthesis; coenzyme A biosynthesis; CoA from (R)-pantothenate: step 4/5. Its function is as follows. Reversibly transfers an adenylyl group from ATP to 4'-phosphopantetheine, yielding dephospho-CoA (dPCoA) and pyrophosphate. This is Phosphopantetheine adenylyltransferase from Moorella thermoacetica (strain ATCC 39073 / JCM 9320).